The primary structure comprises 202 residues: Molybdenum cofactor guanylyltransferase (202 aa).

Residues 9-11 (LAG), lysine 22, aspartate 70, and aspartate 96 each bind GTP. Residue aspartate 96 coordinates Mg(2+).

The protein belongs to the MobA family. In terms of assembly, monomer. It depends on Mg(2+) as a cofactor.

It is found in the cytoplasm. It carries out the reaction Mo-molybdopterin + GTP + H(+) = Mo-molybdopterin guanine dinucleotide + diphosphate. Its function is as follows. Transfers a GMP moiety from GTP to Mo-molybdopterin (Mo-MPT) cofactor (Moco or molybdenum cofactor) to form Mo-molybdopterin guanine dinucleotide (Mo-MGD) cofactor. The polypeptide is Molybdenum cofactor guanylyltransferase (Desulfosudis oleivorans (strain DSM 6200 / JCM 39069 / Hxd3) (Desulfococcus oleovorans)).